The following is a 182-amino-acid chain: Ribosome maturation factor RimM (182 aa).

Residues 103–182 (EDDYYWKDLM…RVEVDWDPGF (80 aa)) form the PRC barrel domain.

This sequence belongs to the RimM family. In terms of assembly, binds ribosomal protein uS19.

The protein resides in the cytoplasm. An accessory protein needed during the final step in the assembly of 30S ribosomal subunit, possibly for assembly of the head region. Essential for efficient processing of 16S rRNA. May be needed both before and after RbfA during the maturation of 16S rRNA. It has affinity for free ribosomal 30S subunits but not for 70S ribosomes. In Yersinia pestis bv. Antiqua (strain Antiqua), this protein is Ribosome maturation factor RimM.